A 209-amino-acid polypeptide reads, in one-letter code: Max dimerization protein 4 (209 aa).

Positions 6 to 23 (LLILLEAAEYLERRDREA) are interaction with SIN3A and SIN3B. In terms of domain architecture, bHLH spans 53 to 105 (NNRSSHNELEKHRRAKLRLYLEQLKQLVPLGPDSTRHTTLSLLKRAKVHIKKL). Positions 140–209 (RVRTDSTGSA…CRRLGRPALS (70 aa)) are disordered. Acidic residues predominate over residues 153 to 163 (DDSEQEVDIEG). Positions 199-209 (HCRRLGRPALS) are enriched in basic residues.

As to quaternary structure, efficient DNA binding requires dimerization with another bHLH protein. Binds DNA as a heterodimer with MAX. Interacts with SIN3A AND SIN3B. Interacts with RNF17.

Its subcellular location is the nucleus. Transcriptional repressor. Binds with MAX to form a sequence-specific DNA-binding protein complex which recognizes the core sequence 5'-CAC[GA]TG-3'. Antagonizes MYC transcriptional activity by competing for MAX and suppresses MYC dependent cell transformation. The chain is Max dimerization protein 4 (MXD4) from Homo sapiens (Human).